Reading from the N-terminus, the 132-residue chain is Global transcriptional regulator Spx 2 (132 aa).

Residues cysteine 10 and cysteine 13 are joined by a disulfide bond.

The protein belongs to the ArsC family. Spx subfamily. As to quaternary structure, interacts with the C-terminal domain of the alpha subunit of the RNAP.

The protein resides in the cytoplasm. Its function is as follows. Global transcriptional regulator that plays a key role in stress response and exerts either positive or negative regulation of genes. Acts by interacting with the C-terminal domain of the alpha subunit of the RNA polymerase (RNAP). This interaction can enhance binding of RNAP to the promoter region of target genes and stimulate their transcription, or block interaction of RNAP with activator. This is Global transcriptional regulator Spx 2 from Lactococcus lactis subsp. lactis (strain IL1403) (Streptococcus lactis).